We begin with the raw amino-acid sequence, 302 residues long: MSLSGIITALATPFGPDGALDLDAWRRLLEQQLHGGVQGLVVAGSTGEAAALSDDEYDTLLRAAAAQVAGRVPVLAGTGLSGTAKTIAQTRRAAALGAQYALVVTPPYVRPTQAGLKAHFLAVADEGGLPVVLYNVPGRTGCDLLPETVAELVGHPNIVGIKEARSEPERVAALVALRSDSFVVLSGDDGSAAHAMLSGAAGLISVASNALPAAYRRLCDLARDGQRDAAAAWDARLSEYHNFCGIESNPIPVKALLQRAGIGHGLRLPLLPLSAAHQPAADRLAADAIALEALSSREMLAA.

Position 46 (Thr-46) interacts with pyruvate. The active-site Proton donor/acceptor is Tyr-134. The active-site Schiff-base intermediate with substrate is Lys-162. Ile-204 provides a ligand contact to pyruvate.

Belongs to the DapA family. As to quaternary structure, homotetramer; dimer of dimers.

Its subcellular location is the cytoplasm. It carries out the reaction L-aspartate 4-semialdehyde + pyruvate = (2S,4S)-4-hydroxy-2,3,4,5-tetrahydrodipicolinate + H2O + H(+). Its pathway is amino-acid biosynthesis; L-lysine biosynthesis via DAP pathway; (S)-tetrahydrodipicolinate from L-aspartate: step 3/4. Catalyzes the condensation of (S)-aspartate-beta-semialdehyde [(S)-ASA] and pyruvate to 4-hydroxy-tetrahydrodipicolinate (HTPA). The sequence is that of 4-hydroxy-tetrahydrodipicolinate synthase from Xanthomonas axonopodis pv. citri (strain 306).